The chain runs to 250 residues: MIINIGLSGATGKMGRTILERIDNFKNCKISAKFNSTRDLHELNDLCKNSDVVIDFSTPEILEKLVDSALKYDTKLVIGTTGFTSSQFKLLEKAAKTLPILYSANMSIGANLLGYLAKEATKILDDYDIEILEAHHRAKKDAPSGTAIMLAEMVTAEKELDITFNRGNKTRRTNEIGISSLRGGNVHGTHEIFFLGDDETITLKHEALNKNSFADGAIRAAIWLQDKQTGLYSMLDFYKNLINYHLKKPI.

NAD(+)-binding positions include 9 to 14 (GATGKM), 79 to 81 (GTT), and 103 to 106 (SANM). Catalysis depends on H135, which acts as the Proton donor/acceptor. H136 serves as a coordination point for (S)-2,3,4,5-tetrahydrodipicolinate. K139 serves as the catalytic Proton donor. 145 to 146 (GT) serves as a coordination point for (S)-2,3,4,5-tetrahydrodipicolinate.

Belongs to the DapB family.

The protein resides in the cytoplasm. The catalysed reaction is (S)-2,3,4,5-tetrahydrodipicolinate + NAD(+) + H2O = (2S,4S)-4-hydroxy-2,3,4,5-tetrahydrodipicolinate + NADH + H(+). It carries out the reaction (S)-2,3,4,5-tetrahydrodipicolinate + NADP(+) + H2O = (2S,4S)-4-hydroxy-2,3,4,5-tetrahydrodipicolinate + NADPH + H(+). Its pathway is amino-acid biosynthesis; L-lysine biosynthesis via DAP pathway; (S)-tetrahydrodipicolinate from L-aspartate: step 4/4. Its function is as follows. Catalyzes the conversion of 4-hydroxy-tetrahydrodipicolinate (HTPA) to tetrahydrodipicolinate. The protein is 4-hydroxy-tetrahydrodipicolinate reductase of Rickettsia bellii (strain OSU 85-389).